Consider the following 351-residue polypeptide: Nicotinate-nucleotide--dimethylbenzimidazole phosphoribosyltransferase (351 aa).

Catalysis depends on Glu-317, which acts as the Proton acceptor.

The protein belongs to the CobT family.

The enzyme catalyses 5,6-dimethylbenzimidazole + nicotinate beta-D-ribonucleotide = alpha-ribazole 5'-phosphate + nicotinate + H(+). The protein operates within nucleoside biosynthesis; alpha-ribazole biosynthesis; alpha-ribazole from 5,6-dimethylbenzimidazole: step 1/2. Functionally, catalyzes the synthesis of alpha-ribazole-5'-phosphate from nicotinate mononucleotide (NAMN) and 5,6-dimethylbenzimidazole (DMB). This is Nicotinate-nucleotide--dimethylbenzimidazole phosphoribosyltransferase from Pseudomonas putida (strain ATCC 700007 / DSM 6899 / JCM 31910 / BCRC 17059 / LMG 24140 / F1).